The sequence spans 104 residues: Large ribosomal subunit protein uL24 (104 aa).

It belongs to the universal ribosomal protein uL24 family. In terms of assembly, part of the 50S ribosomal subunit.

In terms of biological role, one of two assembly initiator proteins, it binds directly to the 5'-end of the 23S rRNA, where it nucleates assembly of the 50S subunit. Functionally, one of the proteins that surrounds the polypeptide exit tunnel on the outside of the subunit. In Caulobacter sp. (strain K31), this protein is Large ribosomal subunit protein uL24.